The chain runs to 1051 residues: Carbamoyl phosphate synthase large chain (1051 aa).

The interval methionine 1 to aspartate 399 is carboxyphosphate synthetic domain. ATP contacts are provided by arginine 127, arginine 167, glycine 173, glycine 174, lysine 206, leucine 208, glutamate 213, glycine 239, valine 240, histidine 241, glutamine 282, and glutamate 296. Positions arginine 131–leucine 325 constitute an ATP-grasp 1 domain. Glutamine 282, glutamate 296, and asparagine 298 together coordinate Mg(2+). Mn(2+) contacts are provided by glutamine 282, glutamate 296, and asparagine 298. The interval isoleucine 400–isoleucine 548 is oligomerization domain. The carbamoyl phosphate synthetic domain stretch occupies residues glutamate 549–asparagine 930. Residues serine 673–phenylalanine 863 enclose the ATP-grasp 2 domain. 10 residues coordinate ATP: arginine 709, lysine 748, isoleucine 750, glutamate 755, glycine 779, valine 780, histidine 781, serine 782, glutamine 822, and glutamate 834. Mg(2+) is bound by residues glutamine 822, glutamate 834, and asparagine 836. Mn(2+) is bound by residues glutamine 822, glutamate 834, and asparagine 836. Residues asparagine 930–isoleucine 1051 form the MGS-like domain. The allosteric domain stretch occupies residues arginine 931–isoleucine 1051.

This sequence belongs to the CarB family. As to quaternary structure, composed of two chains; the small (or glutamine) chain promotes the hydrolysis of glutamine to ammonia, which is used by the large (or ammonia) chain to synthesize carbamoyl phosphate. Tetramer of heterodimers (alpha,beta)4. Mg(2+) serves as cofactor. It depends on Mn(2+) as a cofactor.

The enzyme catalyses hydrogencarbonate + L-glutamine + 2 ATP + H2O = carbamoyl phosphate + L-glutamate + 2 ADP + phosphate + 2 H(+). It catalyses the reaction hydrogencarbonate + NH4(+) + 2 ATP = carbamoyl phosphate + 2 ADP + phosphate + 2 H(+). Its pathway is amino-acid biosynthesis; L-arginine biosynthesis; carbamoyl phosphate from bicarbonate: step 1/1. The protein operates within pyrimidine metabolism; UMP biosynthesis via de novo pathway; (S)-dihydroorotate from bicarbonate: step 1/3. In terms of biological role, large subunit of the glutamine-dependent carbamoyl phosphate synthetase (CPSase). CPSase catalyzes the formation of carbamoyl phosphate from the ammonia moiety of glutamine, carbonate, and phosphate donated by ATP, constituting the first step of 2 biosynthetic pathways, one leading to arginine and/or urea and the other to pyrimidine nucleotides. The large subunit (synthetase) binds the substrates ammonia (free or transferred from glutamine from the small subunit), hydrogencarbonate and ATP and carries out an ATP-coupled ligase reaction, activating hydrogencarbonate by forming carboxy phosphate which reacts with ammonia to form carbamoyl phosphate. The polypeptide is Carbamoyl phosphate synthase large chain (Saccharolobus solfataricus (strain ATCC 35092 / DSM 1617 / JCM 11322 / P2) (Sulfolobus solfataricus)).